Consider the following 462-residue polypeptide: MEYRIERDTLGEIKVPADKLWAAQTQRSKENFPIGTEQMPLEIVKAFAILKKSAALSNQKLGKLSEEKAEAIVEAADEVIAGKWNEHFPLVVWQTGSGTQSNMNVNEVIANRGNQILKEKGSDVHIHPNDDVNMSQSSNDTFPTALHVACVIAVENHVLPAITKLKETLVEKVTAFEHIIKIGRTHLQDATPLTLGQEISGWHRMLEKTERMIAESNTYMKELAIGGTAVGTGINAHPKFGEMVSEEISQFTGKQFVSAPNKFHALTSHDEVVYTHGALKALAADLMKIANDVRWLASGPRSGLGEIIIPANEPGSSIMPGKVNPTQSEALTMVVAQVMGNDATIGFAASQGNFELNVFKPVIAYNFLQSAHLLADAIVSFNDNCAVGIEADEEVINENVNRSLMLVTALNPHIGYENAAKIAKHAHKEGLTLKEAALQSGLLTEEQFDEIVDPKKMIAPKE.

Residues 97-99 (SGT), 127-130 (HPND), 137-139 (SSN), and Thr185 each bind substrate. The active-site Proton donor/acceptor is the His186. The active site involves Ser316. Substrate-binding positions include Ser317 and 322–324 (KVN).

Belongs to the class-II fumarase/aspartase family. Fumarase subfamily. In terms of assembly, homotetramer.

It is found in the cytoplasm. The catalysed reaction is (S)-malate = fumarate + H2O. It functions in the pathway carbohydrate metabolism; tricarboxylic acid cycle; (S)-malate from fumarate: step 1/1. Involved in the TCA cycle. Catalyzes the stereospecific interconversion of fumarate to L-malate. This is Fumarate hydratase class II from Bacillus cereus (strain ATCC 14579 / DSM 31 / CCUG 7414 / JCM 2152 / NBRC 15305 / NCIMB 9373 / NCTC 2599 / NRRL B-3711).